A 675-amino-acid chain; its full sequence is L-type lectin-domain containing receptor kinase IV.1 (675 aa).

An N-terminal signal peptide occupies residues 1–22; the sequence is MFLKLLTIFFFFFFNLIFQSSS. The Extracellular segment spans residues 23 to 291; that stretch reads QSLNFAYNNG…EPKRISEFYK (269 aa). A legume-lectin like region spans residues 25–261; sequence LNFAYNNGFN…SEHYILGWSF (237 aa). N-linked (GlcNAc...) asparagine glycosylation is found at asparagine 57, asparagine 79, asparagine 112, asparagine 134, asparagine 153, and asparagine 186. A helical membrane pass occupies residues 292 to 312; the sequence is IGMPLISLFLIFSFIFLVCYI. Residues 313 to 675 are Cytoplasmic-facing; that stretch reads VRRRRKFAEE…IADSQLSGGR (363 aa). Residues 347–624 form the Protein kinase domain; the sequence is FKEKGLLGTG…LHYLRGDAKL (278 aa). ATP contacts are provided by residues 353–361 and lysine 376; that span reads LGTGGFGSV. The active-site Proton acceptor is the aspartate 472.

It in the C-terminal section; belongs to the protein kinase superfamily. Ser/Thr protein kinase family. In the N-terminal section; belongs to the leguminous lectin family.

The protein localises to the membrane. It catalyses the reaction L-seryl-[protein] + ATP = O-phospho-L-seryl-[protein] + ADP + H(+). It carries out the reaction L-threonyl-[protein] + ATP = O-phospho-L-threonyl-[protein] + ADP + H(+). The polypeptide is L-type lectin-domain containing receptor kinase IV.1 (LECRK41) (Arabidopsis thaliana (Mouse-ear cress)).